A 454-amino-acid chain; its full sequence is Sensor histidine kinase RppB (454 aa).

Over 1–13 (MNTRRLFARSRLQ) the chain is Periplasmic. A helical transmembrane segment spans residues 14 to 34 (LAFWYALVMGGILTLLGLGVY). Residues 35–186 (RAIVQANWMA…LAAFDAENKR (152 aa)) lie on the Cytoplasmic side of the membrane. Residues 187–207 (ILWILGLSFPIALGLVAFSSW) form a helical membrane-spanning segment. Topologically, residues 208-454 (GLAGLAMRPI…PIFSVPIVHS (247 aa)) are periplasmic. In terms of domain architecture, Histidine kinase spans 230–448 (NAAHELRSPL…LFTIQLPIFS (219 aa)). His-233 carries the phosphohistidine; by autocatalysis modification.

It is found in the cell inner membrane. The catalysed reaction is ATP + protein L-histidine = ADP + protein N-phospho-L-histidine.. Functionally, member of two-component regulatory system RppA/RppB, involved in the establishment of the appropriate stoichiometry between the 2 photosystems. It senses changes in the plastoquinone (PQ) redox poise. Another group shows this two-component pair, renamed NrsR/NrsS, controls the nickel-dependent expression of the nrsBACD operon; they suggest the photosystem-related activities seen earlier are due to the expression of NrsS (RppB) in the absence of its natural substrate NrsR (RppA). The polypeptide is Sensor histidine kinase RppB (Synechocystis sp. (strain ATCC 27184 / PCC 6803 / Kazusa)).